The primary structure comprises 499 residues: Lysine--tRNA ligase (499 aa).

Mg(2+) is bound by residues Glu408 and Glu415.

The protein belongs to the class-II aminoacyl-tRNA synthetase family. Homodimer. Mg(2+) serves as cofactor.

Its subcellular location is the cytoplasm. The catalysed reaction is tRNA(Lys) + L-lysine + ATP = L-lysyl-tRNA(Lys) + AMP + diphosphate. The sequence is that of Lysine--tRNA ligase from Bacillus cereus (strain B4264).